We begin with the raw amino-acid sequence, 627 residues long: Chaperone protein DnaK (627 aa).

T197 carries the post-translational modification Phosphothreonine; by autocatalysis. Positions 602–611 (ENQHSEANTV) are enriched in polar residues. The interval 602-627 (ENQHSEANTVNDEKVVDADFQDVDKK) is disordered. The segment covering 612–627 (NDEKVVDADFQDVDKK) has biased composition (basic and acidic residues).

It belongs to the heat shock protein 70 family.

Functionally, acts as a chaperone. This chain is Chaperone protein DnaK, found in Rickettsia felis (strain ATCC VR-1525 / URRWXCal2) (Rickettsia azadi).